We begin with the raw amino-acid sequence, 475 residues long: UDP-N-acetylmuramate--L-alanine ligase (475 aa).

Residue 112–118 (GTHGKTT) participates in ATP binding.

It belongs to the MurCDEF family.

It localises to the cytoplasm. The catalysed reaction is UDP-N-acetyl-alpha-D-muramate + L-alanine + ATP = UDP-N-acetyl-alpha-D-muramoyl-L-alanine + ADP + phosphate + H(+). The protein operates within cell wall biogenesis; peptidoglycan biosynthesis. Functionally, cell wall formation. This chain is UDP-N-acetylmuramate--L-alanine ligase, found in Cupriavidus pinatubonensis (strain JMP 134 / LMG 1197) (Cupriavidus necator (strain JMP 134)).